We begin with the raw amino-acid sequence, 545 residues long: Toxin BC_0920 (545 aa).

In terms of domain architecture, LXG spans 1–217; it reads MSLNMYLGEV…ARQAANSIEE (217 aa).

The protein in the N-terminal section; belongs to the LXG family. This sequence in the C-terminal section; belongs to the bacterial EndoU family. Probably interacts with cognate immunity protein BC_0921. The interaction inhibits the toxic activity of BC_0921.

It localises to the secreted. Its function is as follows. Toxic component of an LXG toxin-immunity module. The C-terminus (residues 322-545) has RNase activity in E.coli which is neutralized by cognate immunity protein BC_0921, but not by immunity proteins specific to other toxins with the LXG domain. Degrades 5S rRNA and several tRNAs in vitro; cleavage is endonucleolytic within the anticodon loop for tRNA(GAU-Ile) and tRNA(UUC-Glu) but total for 5S rRNA and at least one other tRNA. RNase activity is suppressed by cognate immunity protein BC_0921. The polypeptide is Toxin BC_0920 (Bacillus cereus (strain ATCC 14579 / DSM 31 / CCUG 7414 / JCM 2152 / NBRC 15305 / NCIMB 9373 / NCTC 2599 / NRRL B-3711)).